A 366-amino-acid polypeptide reads, in one-letter code: MRPAQASIDLEALRHNYRLAKRLGGSKALAVVKADAYGHGAVPCAQALEPEADGFAVACIEEALELRQAGIRAPILLLEGFFEHDELRLIAEHDLWTVAATPQQVRALAAFQSPRPLRVWLKMDSGMHRLGLSPEDFRAAWLRLRGLPQIASLVLMTHLARADELDCSRTDEQAVAFALTAGGMRAETSLRNSPGLLGWPALRNDWSRPGLMLYGANPFPQDTENTAQLRPVMTLRSRIILVRDLPVGEPVGYGARFVAERPTRVGVVAMGYADGYPQFAPNGTPVLVDGQVCPLIGRVSMDMLTVDLTDHPQADIGATVQLWGQAPRVGPLATQCNVSAYQLLCGLKRVPRTYVASAAVGEVAAR.

Residue K33 is the Proton acceptor; specific for D-alanine of the active site. K33 is modified (N6-(pyridoxal phosphate)lysine). R129 serves as a coordination point for substrate. The active-site Proton acceptor; specific for L-alanine is Y253. M301 contributes to the substrate binding site.

It belongs to the alanine racemase family. It depends on pyridoxal 5'-phosphate as a cofactor.

It carries out the reaction L-alanine = D-alanine. It participates in amino-acid biosynthesis; D-alanine biosynthesis; D-alanine from L-alanine: step 1/1. In terms of biological role, catalyzes the interconversion of L-alanine and D-alanine. May also act on other amino acids. The sequence is that of Alanine racemase (alr) from Xanthomonas oryzae pv. oryzae (strain MAFF 311018).